The following is a 967-amino-acid chain: Isoleucine--tRNA ligase 2 (967 aa).

A 'HIGH' region motif is present at residues proline 58–histidine 68. Residues alanine 437–glycine 446 are compositionally biased toward low complexity. The tract at residues alanine 437 to leucine 466 is disordered. Glutamate 598 is a binding site for L-isoleucyl-5'-AMP. A 'KMSKS' region motif is present at residues lysine 639–serine 643. Position 642 (lysine 642) interacts with ATP. Residues cysteine 922, cysteine 925, cysteine 942, and cysteine 945 each contribute to the Zn(2+) site.

Belongs to the class-I aminoacyl-tRNA synthetase family. IleS type 1 subfamily. Monomer. It depends on Zn(2+) as a cofactor.

The protein localises to the cytoplasm. It carries out the reaction tRNA(Ile) + L-isoleucine + ATP = L-isoleucyl-tRNA(Ile) + AMP + diphosphate. Functionally, catalyzes the attachment of isoleucine to tRNA(Ile). As IleRS can inadvertently accommodate and process structurally similar amino acids such as valine, to avoid such errors it has two additional distinct tRNA(Ile)-dependent editing activities. One activity is designated as 'pretransfer' editing and involves the hydrolysis of activated Val-AMP. The other activity is designated 'posttransfer' editing and involves deacylation of mischarged Val-tRNA(Ile). The chain is Isoleucine--tRNA ligase 2 from Burkholderia mallei (strain ATCC 23344).